Reading from the N-terminus, the 582-residue chain is ABC transporter-like protein ECU11_1340 (582 aa).

In terms of domain architecture, ABC transporter spans 15–257 (VPNQNLSSNE…LGTKGIHNDG (243 aa)). 47–54 (GTSGSGKT) serves as a coordination point for ATP. The ABC transmembrane type-2 domain maps to 316-519 (YVSFQMAIRQ…EIDAFISNFF (204 aa)). 6 consecutive transmembrane segments (helical) span residues 335-355 (ILYSLAMPIAMALFLVTGKYI), 359-378 (FSIATIKASMLSLSLYYVMN), 412-432 (TLVSILKYCIFFGIIYAFGLI), 436-456 (HAFLGQVLMYTLGGTVSSMLF), 482-502 (GALLGAGALLGALTLWISVIP), and 551-571 (SFLRILFLMFHPFAFFHSSIL).

Belongs to the ABC transporter superfamily.

The protein localises to the membrane. This Encephalitozoon cuniculi (strain GB-M1) (Microsporidian parasite) protein is ABC transporter-like protein ECU11_1340.